The following is a 128-amino-acid chain: uncharacterized protein (128 aa).

Residues I95–K123 are a coiled coil.

Its subcellular location is the cellular thylakoid membrane. This is an uncharacterized protein from Synechocystis sp. (strain ATCC 27184 / PCC 6803 / Kazusa).